The sequence spans 593 residues: Protein PSP2 (593 aa).

Residues 56–65 (AGEHQRDGHQ) show a composition bias toward basic and acidic residues. Positions 56 to 101 (AGEHQRDGHQQHPHGGHGPMNRSRFSNAGPFGGGSMGDFANHHHPL) are disordered. Phosphoserine occurs at positions 150 and 238. 2 disordered regions span residues 227–248 (KPFI…KPVD) and 280–593 (DSMA…DMPL). Composition is skewed to polar residues over residues 231-241 (TKTQRSKSNPF) and 280-290 (DSMATTATGSK). Ser340 carries the phosphoserine modification. The span at 347–402 (SKPDKSDEFKGGDEQGFEKGGDDKAQLDVSNDKDKGSETDVDKQFTFKNVEREHSM) shows a compositional bias: basic and acidic residues. The segment covering 408-426 (NGNHNNNNGNFRGSNRYRG) has biased composition (low complexity). Residues Arg419, Arg425, and Arg440 each carry the omega-N-methylarginine modification. Position 443 is a dimethylated arginine (Arg443). Residue Arg447 is modified to Omega-N-methylarginine. The segment covering 449–477 (GSSYNNNNNNTNDNNNNNNNSSSNNNNGS) has biased composition (low complexity). 2 stretches are compositionally biased toward polar residues: residues 486-497 (EEGLTSDSSLDA) and 505-516 (FTNSTSNTQQYS). Ser522 carries the post-translational modification Phosphoserine. A compositionally biased stretch (low complexity) spans 534–545 (RNNGRGNYNSSG). 3 positions are modified to omega-N-methylarginine: Arg538, Arg551, and Arg575. The span at 546 to 563 (MNGGSRGRGFGRGRGFGR) shows a compositional bias: gly residues. Over residues 578 to 587 (SGNYSNYNNR) the composition is skewed to low complexity.

It is found in the cytoplasm. It localises to the P-body. The protein localises to the stress granule. In terms of biological role, DNA polymerase alpha mutation suppressor. Suppressor of group II intron splicing defects of a mutation in MRS2. May play a role in mitochondrial mRNA splicing. This is Protein PSP2 from Saccharomyces cerevisiae (strain ATCC 204508 / S288c) (Baker's yeast).